The chain runs to 335 residues: GTPase Obg (335 aa).

An Obg domain is found at 1–158 (MFLDQITIEL…RQVELELKLI (158 aa)). In terms of domain architecture, OBG-type G spans 159-334 (ADIGLVGFPN…LNSLFTNKLA (176 aa)). GTP contacts are provided by residues 165–172 (GFPNAGKS), 190–194 (FTTLQ), 215–218 (DIPG), 285–288 (NKID), and 315–317 (SGL). Residues Ser172 and Thr192 each coordinate Mg(2+).

It belongs to the TRAFAC class OBG-HflX-like GTPase superfamily. OBG GTPase family. Monomer. It depends on Mg(2+) as a cofactor.

It is found in the cytoplasm. Functionally, an essential GTPase (4.1 pmol GTP/min). Cannot substitute endogenous obg in E.coli, has a partially dominant-negative phenotype upon overexpression in liquid culture leading to decreased growth rate in a concentration-dependent fashion, with 50% of cells being elongated. Binds GTP, GDP and possibly (p)ppGpp with moderate affinity, with high nucleotide exchange rates and a fairly low GTP hydrolysis rate. It may play a role in control of the cell cycle, stress response, ribosome biogenesis and in those bacteria that undergo differentiation, in morphogenesis control. This Chlamydia abortus (strain DSM 27085 / S26/3) (Chlamydophila abortus) protein is GTPase Obg.